The primary structure comprises 436 residues: GTPase Der (436 aa).

EngA-type G domains follow at residues Pro4–Tyr167 and Ile175–Asn351. GTP contacts are provided by residues Gly10–Ser17, Asp57–Ile61, Asn119–Asp122, Gly181–Ser188, Asp229–Met233, and Asn294–Asp297. The region spanning Thr352–Lys436 is the KH-like domain.

The protein belongs to the TRAFAC class TrmE-Era-EngA-EngB-Septin-like GTPase superfamily. EngA (Der) GTPase family. As to quaternary structure, associates with the 50S ribosomal subunit.

GTPase that plays an essential role in the late steps of ribosome biogenesis. In Streptococcus pneumoniae (strain JJA), this protein is GTPase Der.